The chain runs to 940 residues: Phosphoenolpyruvate carboxylase (940 aa).

Active-site residues include His-138 and Lys-603.

Belongs to the PEPCase type 1 family. It depends on Mg(2+) as a cofactor.

The catalysed reaction is oxaloacetate + phosphate = phosphoenolpyruvate + hydrogencarbonate. Its function is as follows. Forms oxaloacetate, a four-carbon dicarboxylic acid source for the tricarboxylic acid cycle. The sequence is that of Phosphoenolpyruvate carboxylase from Streptococcus thermophilus (strain CNRZ 1066).